The sequence spans 113 residues: Cytochrome c2 (113 aa).

Residues Cys15, Cys18, His19, and Met92 each contribute to the heme c site.

The protein belongs to the cytochrome c family. Post-translationally, binds 1 heme c group covalently per subunit.

In terms of biological role, cytochrome c2 is found mainly in purple, non-sulfur, photosynthetic bacteria where it functions as the electron donor to the oxidized bacteriochlorophyll in the photophosphorylation pathway. However, it may also have a role in the respiratory chain and is found in some non-photosynthetic bacteria. This Pararhodospirillum photometricum (Rhodospirillum photometricum) protein is Cytochrome c2.